A 107-amino-acid polypeptide reads, in one-letter code: uncharacterized protein (107 aa).

A Glutaredoxin domain is found at 6–107; that stretch reads KKVIEQILDN…QAQVETLLAA (102 aa). Lys-23 contributes to the glutathione binding site. Cys-31 is a [2Fe-2S] cluster binding site. Residues Arg-60 and 85–86 contribute to the glutathione site; that span reads AD.

It belongs to the glutaredoxin family. Monothiol subfamily.

Its subcellular location is the plastid. The protein resides in the chloroplast. This is an uncharacterized protein from Porphyra purpurea (Red seaweed).